We begin with the raw amino-acid sequence, 178 residues long: CASP-like protein 4D1 (178 aa).

The Cytoplasmic segment spans residues 1 to 14; sequence MAPPPPSPPSVTLR. A helical membrane pass occupies residues 15–35; it reads TVLLLLRVLTAAFLVITVVLI. Residues 36 to 60 lie on the Extracellular side of the membrane; it reads STNTVTLEVSSTSIKMRFNDVYAYR. A helical transmembrane segment spans residues 61–81; the sequence is YMLSAAVIGLLYAVVQLFLTI. The Cytoplasmic segment spans residues 82-149; it reads SQFATGTTHP…KFFSKGYASA (68 aa). Residues 150 to 170 traverse the membrane as a helical segment; that stretch reads SLLLFAFVSLAVLSVFSSLAL. Over 171–178 the chain is Extracellular; the sequence is SKRPIQVS.

The protein belongs to the Casparian strip membrane proteins (CASP) family. In terms of assembly, homodimer and heterodimers.

It localises to the cell membrane. The polypeptide is CASP-like protein 4D1 (Arabidopsis lyrata subsp. lyrata (Lyre-leaved rock-cress)).